The chain runs to 66 residues: Large ribosomal subunit protein bL33c (66 aa).

It belongs to the bacterial ribosomal protein bL33 family.

Its subcellular location is the plastid. It is found in the chloroplast. The polypeptide is Large ribosomal subunit protein bL33c (Ipomoea purpurea (Common morning glory)).